Here is an 821-residue protein sequence, read N- to C-terminus: Protein SCAR1 (821 aa).

Disordered stretches follow at residues 168–189 (KRAS…QRGR), 205–289 (TCTS…RGSS), and 577–625 (TSLP…RESK). Over residues 206 to 225 (CTSLSFSGRTSTSKTASTIE) the composition is skewed to polar residues. Residues 226–250 (IESKSDLQEHRSFSFDSRSGGEKPK) are compositionally biased toward basic and acidic residues. Residues 252-265 (VSSSSRFTPGSRTI) show a composition bias toward polar residues. Residues 592-612 (SSSYISDNSDNDNRSVSMSEQ) are compositionally biased toward low complexity. The WH2 domain maps to 756-774 (EAGDFLHQIRTKQFNLRRV). Positions 802–821 (QAVASDDGEGESDTWSDSDT) are disordered. Residues 807–821 (DDGEGESDTWSDSDT) are compositionally biased toward acidic residues.

This sequence belongs to the SCAR/WAVE family. In terms of assembly, binds BRK1 and actin. Interacts with SPK1, ABI1 and ABI2. In terms of tissue distribution, expressed in expanding cotyledons, expanding leaves and expanding siliques containing developing embryos. Detected in unopened flower buds and in the expanding tip region of roots. Reduced expression in mature leaves and mature cotyledons.

It is found in the cytoplasm. The protein resides in the cytoskeleton. Its function is as follows. Involved in regulation of actin and microtubule organization. Part of a WAVE complex that activates the Arp2/3 complex. Regulates trichome branch positioning and expansion. This Arabidopsis thaliana (Mouse-ear cress) protein is Protein SCAR1 (SCAR1).